The following is a 315-amino-acid chain: 4-hydroxy-3-methylbut-2-enyl diphosphate reductase (315 aa).

Cys-12 is a binding site for [4Fe-4S] cluster. (2E)-4-hydroxy-3-methylbut-2-enyl diphosphate contacts are provided by His-41 and His-74. Residues His-41 and His-74 each coordinate dimethylallyl diphosphate. Isopentenyl diphosphate-binding residues include His-41 and His-74. Cys-96 is a [4Fe-4S] cluster binding site. His-124 contacts (2E)-4-hydroxy-3-methylbut-2-enyl diphosphate. His-124 serves as a coordination point for dimethylallyl diphosphate. His-124 contacts isopentenyl diphosphate. Glu-126 functions as the Proton donor in the catalytic mechanism. Position 168 (Thr-168) interacts with (2E)-4-hydroxy-3-methylbut-2-enyl diphosphate. Cys-198 is a [4Fe-4S] cluster binding site. Positions 226, 227, 228, and 270 each coordinate (2E)-4-hydroxy-3-methylbut-2-enyl diphosphate. Residues Ser-226, Ser-227, Asn-228, and Ser-270 each coordinate dimethylallyl diphosphate. Residues Ser-226, Ser-227, Asn-228, and Ser-270 each coordinate isopentenyl diphosphate.

Belongs to the IspH family. [4Fe-4S] cluster is required as a cofactor.

It carries out the reaction isopentenyl diphosphate + 2 oxidized [2Fe-2S]-[ferredoxin] + H2O = (2E)-4-hydroxy-3-methylbut-2-enyl diphosphate + 2 reduced [2Fe-2S]-[ferredoxin] + 2 H(+). The enzyme catalyses dimethylallyl diphosphate + 2 oxidized [2Fe-2S]-[ferredoxin] + H2O = (2E)-4-hydroxy-3-methylbut-2-enyl diphosphate + 2 reduced [2Fe-2S]-[ferredoxin] + 2 H(+). It participates in isoprenoid biosynthesis; dimethylallyl diphosphate biosynthesis; dimethylallyl diphosphate from (2E)-4-hydroxy-3-methylbutenyl diphosphate: step 1/1. The protein operates within isoprenoid biosynthesis; isopentenyl diphosphate biosynthesis via DXP pathway; isopentenyl diphosphate from 1-deoxy-D-xylulose 5-phosphate: step 6/6. Its function is as follows. Catalyzes the conversion of 1-hydroxy-2-methyl-2-(E)-butenyl 4-diphosphate (HMBPP) into a mixture of isopentenyl diphosphate (IPP) and dimethylallyl diphosphate (DMAPP). Acts in the terminal step of the DOXP/MEP pathway for isoprenoid precursor biosynthesis. The sequence is that of 4-hydroxy-3-methylbut-2-enyl diphosphate reductase from Pseudomonas putida (strain W619).